The sequence spans 211 residues: Redox-sensing transcriptional repressor Rex (211 aa).

Positions 16–55 (LYYRYLLILNEEGKDKVSSTELSEAVQVDSASIRRDFSYF) form a DNA-binding region, H-T-H motif. 90-95 (GVGNLG) lines the NAD(+) pocket.

The protein belongs to the transcriptional regulatory Rex family. As to quaternary structure, homodimer.

The protein resides in the cytoplasm. Modulates transcription in response to changes in cellular NADH/NAD(+) redox state. This chain is Redox-sensing transcriptional repressor Rex, found in Lactobacillus acidophilus (strain ATCC 700396 / NCK56 / N2 / NCFM).